The following is a 236-amino-acid chain: Large ribosomal subunit protein uL3 (236 aa).

Over residues 139 to 149 (SVSHRSHGSTG) the composition is skewed to low complexity. Positions 139-165 (SVSHRSHGSTGQRQDPGKVFKGKKMAG) are disordered. Glutamine 152 carries the N5-methylglutamine modification.

The protein belongs to the universal ribosomal protein uL3 family. In terms of assembly, part of the 50S ribosomal subunit. Forms a cluster with proteins L14 and L19. Methylated by PrmB.

One of the primary rRNA binding proteins, it binds directly near the 3'-end of the 23S rRNA, where it nucleates assembly of the 50S subunit. The chain is Large ribosomal subunit protein uL3 from Pelagibacter ubique (strain HTCC1062).